The chain runs to 333 residues: T-cell surface glycoprotein CD1b (333 aa).

The N-terminal stretch at 1–18 is a signal peptide; the sequence is MLLLPFQLLAVLFPGGNS. The Extracellular portion of the chain corresponds to 19–303; that stretch reads EHAFQGPTSF…YWSNPTSIGS (285 aa). Residues Asn38, Asn75, and Asn146 are each glycosylated (N-linked (GlcNAc...) asparagine). Intrachain disulfides connect Cys120-Cys184, Cys149-Cys163, and Cys224-Cys279. The Ig-like domain occupies 185 to 295; it reads PRYLLGVLNA…LEGQDIILYW (111 aa). Asn258 carries an N-linked (GlcNAc...) asparagine glycan. Residues 304-324 traverse the membrane as a helical segment; it reads IVLAIIVPSLLLLLCLALWYM. At 325 to 333 the chain is on the cytoplasmic side; that stretch reads RRRSYQNIP. Positions 329 to 332 match the Internalization signal motif; that stretch reads YQNI.

Heterodimer with B2M (beta-2-microglobulin). Interacts with saposin C. As to expression, expressed in lymphocytes, spleen, lung, liver, kidney and heart.

It localises to the cell membrane. The protein resides in the endosome membrane. It is found in the lysosome membrane. Antigen-presenting protein that binds self and non-self lipid and glycolipid antigens and presents them to T-cell receptors on natural killer T-cells. The protein is T-cell surface glycoprotein CD1b (CD1B) of Aotus nancymaae (Ma's night monkey).